The primary structure comprises 489 residues: Glycogen synthase (489 aa).

Position 20 (R20) interacts with ADP-alpha-D-glucose.

Belongs to the glycosyltransferase 1 family. Bacterial/plant glycogen synthase subfamily.

It carries out the reaction [(1-&gt;4)-alpha-D-glucosyl](n) + ADP-alpha-D-glucose = [(1-&gt;4)-alpha-D-glucosyl](n+1) + ADP + H(+). Its pathway is glycan biosynthesis; glycogen biosynthesis. In terms of biological role, synthesizes alpha-1,4-glucan chains using ADP-glucose. This is Glycogen synthase from Pelodictyon phaeoclathratiforme (strain DSM 5477 / BU-1).